The chain runs to 436 residues: Xylose isomerase (436 aa).

Active-site residues include His-100 and Asp-103. Glu-231, Glu-267, His-270, Asp-295, Asp-306, Asp-308, and Asp-338 together coordinate Mg(2+).

It belongs to the xylose isomerase family. Homotetramer. Mg(2+) is required as a cofactor.

The protein localises to the cytoplasm. It carries out the reaction alpha-D-xylose = alpha-D-xylulofuranose. The sequence is that of Xylose isomerase from Chelativorans sp. (strain BNC1).